Reading from the N-terminus, the 860-residue chain is Leucine--tRNA ligase (860 aa).

The short motif at 42–52 is the 'HIGH' region element; it reads PYPSGRLHMGH. Positions 619–623 match the 'KMSKS' region motif; that stretch reads KMSKS. Lys-622 contacts ATP.

This sequence belongs to the class-I aminoacyl-tRNA synthetase family.

It localises to the cytoplasm. The enzyme catalyses tRNA(Leu) + L-leucine + ATP = L-leucyl-tRNA(Leu) + AMP + diphosphate. The polypeptide is Leucine--tRNA ligase (Salmonella typhimurium (strain LT2 / SGSC1412 / ATCC 700720)).